A 179-amino-acid chain; its full sequence is ATP synthase subunit delta (179 aa).

It belongs to the ATPase delta chain family. As to quaternary structure, F-type ATPases have 2 components, F(1) - the catalytic core - and F(0) - the membrane proton channel. F(1) has five subunits: alpha(3), beta(3), gamma(1), delta(1), epsilon(1). F(0) has three main subunits: a(1), b(2) and c(10-14). The alpha and beta chains form an alternating ring which encloses part of the gamma chain. F(1) is attached to F(0) by a central stalk formed by the gamma and epsilon chains, while a peripheral stalk is formed by the delta and b chains.

It localises to the cell membrane. F(1)F(0) ATP synthase produces ATP from ADP in the presence of a proton or sodium gradient. F-type ATPases consist of two structural domains, F(1) containing the extramembraneous catalytic core and F(0) containing the membrane proton channel, linked together by a central stalk and a peripheral stalk. During catalysis, ATP synthesis in the catalytic domain of F(1) is coupled via a rotary mechanism of the central stalk subunits to proton translocation. Its function is as follows. This protein is part of the stalk that links CF(0) to CF(1). It either transmits conformational changes from CF(0) to CF(1) or is implicated in proton conduction. In Listeria monocytogenes serotype 4b (strain CLIP80459), this protein is ATP synthase subunit delta.